A 497-amino-acid chain; its full sequence is Ammonium transporter 1 (497 aa).

The Extracellular segment spans residues 1-32 (MSSTTDATPTPSGVNGGDSMTVNLNQFYNNGD). Residues 33–53 (VAWILTSTALVFIMIPGVGFF) form a helical membrane-spanning segment. The Cytoplasmic segment spans residues 54 to 63 (YSGLARRRSA). Residues 64 to 84 (ISMLFLSMMSVAIVAFQWFFW) form a helical membrane-spanning segment. Over 85 to 122 (GYSLTFSHEGGPYIGSLANFGLRQTLGRPSSGASSVPD) the chain is Extracellular. The helical transmembrane segment at 123–143 (ILFCVFQGMFAAITPALAIGA) threads the bilayer. Residues 144–150 (AADRGRM) lie on the Cytoplasmic side of the membrane. The chain crosses the membrane as a helical span at residues 151–171 (FPCMVFMFLWTSIVYDPIAFW). Residues 172-187 (TWNPNGWLNKLGSYDF) are Extracellular-facing. Residues 188 to 208 (AGGSPVHISSGMAALAYSIVI) traverse the membrane as a helical segment. Residues 209-223 (GKRCDHGTTKYRPHN) lie on the Cytoplasmic side of the membrane. The chain crosses the membrane as a helical span at residues 224–244 (VPHVVLGTVFLWFGWFGFNGG). The Extracellular portion of the chain corresponds to 245 to 253 (SSAAANMRG). A helical transmembrane segment spans residues 254–274 (VMAVVVTHLAASVGGIVWCVI). Over 275–281 (DFAKNRH) the chain is Cytoplasmic. A helical transmembrane segment spans residues 282 to 302 (WSVVGFCEGAVAGLVAITPGS). Position 303 (Gly303) is a topological domain, extracellular. Residues 304–324 (FVPPWAAVVIGALGAVFCYAA) traverse the membrane as a helical segment. The Cytoplasmic portion of the chain corresponds to 325 to 338 (TYLKKIIRVDDALD). The chain crosses the membrane as a helical span at residues 339-359 (IFAEHGVGGMVGNILTALFAA). Topologically, residues 360 to 394 (DYIEALDGSGTAYTGGWITHHYIQLGYQLADTVSC) are extracellular. A helical membrane pass occupies residues 395-415 (AAYSFAVSCALLFVMNYIPGL). Residues 416-497 (SLRVSREDEV…AESEAQAPAI (82 aa)) are Cytoplasmic-facing. A disordered region spans residues 440–497 (YKDSTDEPPPITTSGVQYTSPTVSDSASNEKEQEHRAQNEAQKEEEYRAESEAQAPAI). The segment covering 451–466 (TTSGVQYTSPTVSDSA) has biased composition (polar residues). Positions 467–490 (SNEKEQEHRAQNEAQKEEEYRAES) are enriched in basic and acidic residues.

This sequence belongs to the ammonia transporter channel (TC 1.A.11.2) family.

It localises to the membrane. Transporter for ammonium to use as a nitrogen source. Under ammonium limitation acts as an ammonium sensor, generating a signal that leads to pseudohyphal growth. This chain is Ammonium transporter 1 (amt1), found in Schizosaccharomyces pombe (strain 972 / ATCC 24843) (Fission yeast).